We begin with the raw amino-acid sequence, 519 residues long: Laccase-2 (519 aa).

An N-terminal signal peptide occupies residues M1 to A20. Plastocyanin-like domains lie at I22 to Y147 and V159 to Y301. The N-linked (GlcNAc...) asparagine glycan is linked to N74. 4 residues coordinate Cu cation: H84, H86, H129, and H131. 2 disulfides stabilise this stretch: C105/C508 and C137/C225. N-linked (GlcNAc...) asparagine glycosylation is found at N161, N228, N237, N271, N353, and N361. The Plastocyanin-like 3 domain occupies T368–D490. Cu cation is bound by residues H415, H418, H420, H472, C473, H474, and H478.

This sequence belongs to the multicopper oxidase family. As to quaternary structure, homodimer. Cu cation is required as a cofactor.

It is found in the secreted. It catalyses the reaction 4 hydroquinone + O2 = 4 benzosemiquinone + 2 H2O. Its function is as follows. Lignin degradation and detoxification of lignin-derived products. The polypeptide is Laccase-2 (Trametes villosa (White-rot fungus)).